We begin with the raw amino-acid sequence, 246 residues long: Uridylate kinase (246 aa).

ATP is bound at residue 18-21 (KVSG). Gly-60 is a UMP binding site. 2 residues coordinate ATP: Gly-61 and Arg-65. Residues Asp-80 and 141–148 (TGNPFFTT) each bind UMP. ATP contacts are provided by Thr-168, Gln-169, Tyr-174, and Asp-177.

It belongs to the UMP kinase family. Homohexamer.

The protein localises to the cytoplasm. The enzyme catalyses UMP + ATP = UDP + ADP. It participates in pyrimidine metabolism; CTP biosynthesis via de novo pathway; UDP from UMP (UMPK route): step 1/1. Its activity is regulated as follows. Inhibited by UTP. In terms of biological role, catalyzes the reversible phosphorylation of UMP to UDP. This is Uridylate kinase from Granulibacter bethesdensis (strain ATCC BAA-1260 / CGDNIH1).